A 312-amino-acid polypeptide reads, in one-letter code: MKWSEISIHTTEEAVEAVSHILHEAGASGVAIEDPAELTKEREQQYGEIYALNPDEYPAEGVLIKAYFPQTDSLHETIAGVKSSIDVLPSYDIEIGTGNITVNEVNEEDWATAWKKYYHPVQISDTFTIVPTWEEYTPSSPDEKIIELDPGMAFGTGTHPTTTMCIRALEKTVQPGDAIIDVGTGSGVLSIAAAKLGASSVQAYDLDPVAVESAEMNVRLNKTDDIVSVGQNSLLEGIEGPVDLIVANLLAEIILLFPEDAARVVKSGGLFITSGIIAAKEKVISEALEQAGFTIEEVLRMEDWVAIIARNA.

Residues Thr162, Gly183, Asp205, and Asn248 each contribute to the S-adenosyl-L-methionine site.

This sequence belongs to the methyltransferase superfamily. PrmA family.

The protein localises to the cytoplasm. The catalysed reaction is L-lysyl-[protein] + 3 S-adenosyl-L-methionine = N(6),N(6),N(6)-trimethyl-L-lysyl-[protein] + 3 S-adenosyl-L-homocysteine + 3 H(+). Methylates ribosomal protein L11. This Bacillus cereus (strain G9842) protein is Ribosomal protein L11 methyltransferase.